The chain runs to 842 residues: MSEYNFTKIEKKWQDYWDKHKTYKVNEDPNIPKEKRIYILDMFPYPSANGLHVGHPEGYTATDILTRYKLLNGFNVLHPIGFDSFGLPAENYAIQTGEHPKKITEKNIKKFKEQIKALGFAYDWDREIRTHDENYYKWTQWIFLKLYKKGLAYTKEMPVWYCPDLGTVLSNEEVIQTPDGPRSERGFHKVKRKPLRQWILKITEYAERLIKDLEEIDWPESVKEMQKNWIGKSTGAEIEFSVKASKEKIKVFTTRPDTIFGVTYLVLAPEHSIVDKITKDEFKPMIVEYRERETLKSDLERTSLEKDKTGVFTGAYAINPITGEEIPIWIGSYILGTYGTGAVMSVPAHDARDFEFAKKYNLPIKQVVSQTGNNEILTQPFTENGISINTPEEFNNLKTDEIKERVIKWLTENKKGQKKVNYKLRDWIFSRQRYWGEPIPIILDDDLNEIPLEEDELPLRLPEIENYKPSGTGESPLSRIQDWVNIKRNGKTYKRETNTMPQWAGSCWYYIRYLDPNNDNEFASKEKINYWMPVDLYIGGAEHSVLHLLYARFWHKVLYDLGYVNTKEPFKKLINQGMITSFAYQDENGILIPNDEVEKKDNKFFSKKNNKELKQIVAKMSKSLKNIINPDDIIKEYGADSMRIYEMFMGPLTDSKPWNTQGLIGIFRFLNKIWTIKNKELTKESASKEIISELHKTIKKVTEDIENLNFNTAISSLMIFINELLKHDKNYLEIFKPLTIILSPFAPHLGEELWEYMGETPSIFKSAKWPEYDPNLIIDNTREIVLQINGKIKDKIILNKGTNEEALKSIALKNHKIMQNIQNKQIIKIITVKDKLINIVTR.

Residues 44-55 (PYPSANGLHVGH) carry the 'HIGH' region motif. A 'KMSKS' region motif is present at residues 619–623 (KMSKS). K622 serves as a coordination point for ATP.

The protein belongs to the class-I aminoacyl-tRNA synthetase family.

The protein localises to the cytoplasm. It catalyses the reaction tRNA(Leu) + L-leucine + ATP = L-leucyl-tRNA(Leu) + AMP + diphosphate. The chain is Leucine--tRNA ligase from Borrelia hermsii (strain HS1 / DAH).